The chain runs to 368 residues: tRNA-specific 2-thiouridylase MnmA (368 aa).

ATP is bound by residues 23–30 and Leu-49; that span reads ALSGGVDS. Cys-110 functions as the Nucleophile in the catalytic mechanism. A disulfide bond links Cys-110 and Cys-209. Gly-135 provides a ligand contact to ATP. The interaction with tRNA stretch occupies residues 159-161; that stretch reads KDQ. Residue Cys-209 is the Cysteine persulfide intermediate of the active site. The tract at residues 314–315 is interaction with tRNA; the sequence is RY.

The protein belongs to the MnmA/TRMU family.

Its subcellular location is the cytoplasm. It catalyses the reaction S-sulfanyl-L-cysteinyl-[protein] + uridine(34) in tRNA + AH2 + ATP = 2-thiouridine(34) in tRNA + L-cysteinyl-[protein] + A + AMP + diphosphate + H(+). Catalyzes the 2-thiolation of uridine at the wobble position (U34) of tRNA, leading to the formation of s(2)U34. The sequence is that of tRNA-specific 2-thiouridylase MnmA from Synechococcus sp. (strain JA-2-3B'a(2-13)) (Cyanobacteria bacterium Yellowstone B-Prime).